The sequence spans 266 residues: Glucosamine-6-phosphate deaminase (266 aa).

D72 functions as the Proton acceptor; for enolization step in the catalytic mechanism. Residue D141 is the For ring-opening step of the active site. H143 functions as the Proton acceptor; for ring-opening step in the catalytic mechanism. Residue E148 is the For ring-opening step of the active site.

This sequence belongs to the glucosamine/galactosamine-6-phosphate isomerase family. NagB subfamily. Homohexamer.

It catalyses the reaction alpha-D-glucosamine 6-phosphate + H2O = beta-D-fructose 6-phosphate + NH4(+). The protein operates within amino-sugar metabolism; N-acetylneuraminate degradation; D-fructose 6-phosphate from N-acetylneuraminate: step 5/5. Its activity is regulated as follows. Allosterically activated by N-acetylglucosamine 6-phosphate (GlcNAc6P). Catalyzes the reversible isomerization-deamination of glucosamine 6-phosphate (GlcN6P) to form fructose 6-phosphate (Fru6P) and ammonium ion. The protein is Glucosamine-6-phosphate deaminase of Serratia proteamaculans (strain 568).